The chain runs to 653 residues: PAN2-PAN3 deadenylation complex subunit PAN3 (653 aa).

Disordered regions lie at residues M1–K21 and H45–D128. Residues N19 to N48 form a C3H1-type zinc finger. The span at S68–S95 shows a compositional bias: low complexity. Residues G108–S119 are compositionally biased toward polar residues. The segment at Q256–S516 is pseudokinase domain. ATP is bound by residues R308, D357–T364, and S416–K417. Residues S517 to F555 are a coiled coil. The tract at residues I556–H653 is knob domain.

This sequence belongs to the protein kinase superfamily. PAN3 family. As to quaternary structure, homodimer. Forms a heterotrimer with a catalytic subunit pan2 to form the poly(A)-nuclease (PAN) deadenylation complex. Interacts (via PAM-2 motif) with poly(A)-binding protein pab1 (via PABC domain), conferring substrate specificity of the enzyme complex.

It localises to the cytoplasm. Regulatory subunit of the poly(A)-nuclease (PAN) deadenylation complex, one of two cytoplasmic mRNA deadenylases involved in mRNA turnover. PAN specifically shortens poly(A) tails of RNA and the activity is stimulated by poly(A)-binding protein pab1. PAN deadenylation is followed by rapid degradation of the shortened mRNA tails by the CCR4-NOT complex. Deadenylated mRNAs are then degraded by two alternative mechanisms, namely exosome-mediated 3'-5' exonucleolytic degradation, or deadenylation-dependent mRNA decaping and subsequent 5'-3' exonucleolytic degradation by xrn1. May also be involved in post-transcriptional maturation of mRNA poly(A) tails. pan3 acts as a positive regulator for PAN activity, recruiting the catalytic subunit pan2 to mRNA via its interaction with RNA and with pab1. This is PAN2-PAN3 deadenylation complex subunit PAN3 from Aspergillus terreus (strain NIH 2624 / FGSC A1156).